The sequence spans 545 residues: Putative serine/threonine-protein kinase L673 (545 aa).

Residues Arg13–Lys125 form the Cyclin N-terminal domain. Residues Ile264–Phe543 enclose the Protein kinase domain. ATP is bound by residues Leu270–Val278 and Lys291. The active-site Proton acceptor is Asp384.

It belongs to the protein kinase superfamily. Ser/Thr protein kinase family.

The enzyme catalyses L-seryl-[protein] + ATP = O-phospho-L-seryl-[protein] + ADP + H(+). The catalysed reaction is L-threonyl-[protein] + ATP = O-phospho-L-threonyl-[protein] + ADP + H(+). The protein is Putative serine/threonine-protein kinase L673 of Acanthamoeba polyphaga (Amoeba).